The following is a 165-amino-acid chain: Histone H1 (165 aa).

Residues 1–165 form a disordered region; sequence GKQSTSKSVT…KKATKGSKKN (165 aa). A compositionally biased stretch (basic and acidic residues) spans 9–18; that stretch reads VTREKKDVKK. Positions 20–31 are enriched in basic residues; that stretch reads VAPKKAIKKVTK. The span at 32-41 shows a compositional bias: low complexity; it reads KSTTPVKTSK. 2 positions are modified to phosphothreonine: threonine 48 and threonine 54. Residues 68-89 are compositionally biased toward basic and acidic residues; it reads TMKESVSDAKKTVHKSAGDKKL. Serine 83 carries the phosphoserine modification. Over residues 103–117 the composition is skewed to basic residues; it reads KIVHPAKKAAAKPKT. Phosphothreonine is present on threonine 117. The span at 118–157 shows a compositional bias: basic and acidic residues; it reads AKKEVKKDTKPVKKDAKKDTKPVKKDAKKDTKPAKKDTKK.

In terms of processing, cell-growth/division-associated phosphorylation by a CDC2-like kinase. Is additionally phosphorylated on either Ser-33, Thr-34 or Thr-35, and on either Thr-39 or Ser-40.

It localises to the nucleus. The protein localises to the chromosome. Functionally, histones H1 are necessary for the condensation of nucleosome chains into higher-order structures. The polypeptide is Histone H1 (HHO) (Tetrahymena pyriformis).